The sequence spans 535 residues: GMP synthase [glutamine-hydrolyzing] (535 aa).

Positions 4-210 (KILILDFGSQ…VHEICKCKPD (207 aa)) constitute a Glutamine amidotransferase type-1 domain. C85 (nucleophile) is an active-site residue. Residues H184 and E186 contribute to the active site. One can recognise a GMPS ATP-PPase domain in the interval 211-403 (WVMGDYIAEA…LGLPREMVYR (193 aa)). An ATP-binding site is contributed by 238 to 244 (SGGVDSS).

In terms of assembly, homodimer.

It catalyses the reaction XMP + L-glutamine + ATP + H2O = GMP + L-glutamate + AMP + diphosphate + 2 H(+). The protein operates within purine metabolism; GMP biosynthesis; GMP from XMP (L-Gln route): step 1/1. Its function is as follows. Catalyzes the synthesis of GMP from XMP. In Polynucleobacter necessarius subsp. necessarius (strain STIR1), this protein is GMP synthase [glutamine-hydrolyzing].